Reading from the N-terminus, the 190-residue chain is dTTP/UTP pyrophosphatase (190 aa).

Residue Asp-69 is the Proton acceptor of the active site.

The protein belongs to the Maf family. YhdE subfamily. It depends on a divalent metal cation as a cofactor.

The protein resides in the cytoplasm. The catalysed reaction is dTTP + H2O = dTMP + diphosphate + H(+). It carries out the reaction UTP + H2O = UMP + diphosphate + H(+). Nucleoside triphosphate pyrophosphatase that hydrolyzes dTTP and UTP. May have a dual role in cell division arrest and in preventing the incorporation of modified nucleotides into cellular nucleic acids. The polypeptide is dTTP/UTP pyrophosphatase (Sphingopyxis alaskensis (strain DSM 13593 / LMG 18877 / RB2256) (Sphingomonas alaskensis)).